A 558-amino-acid polypeptide reads, in one-letter code: Formate--tetrahydrofolate ligase 2 (558 aa).

67–74 (TPAGEGKT) is an ATP binding site.

The protein belongs to the formate--tetrahydrofolate ligase family.

It catalyses the reaction (6S)-5,6,7,8-tetrahydrofolate + formate + ATP = (6R)-10-formyltetrahydrofolate + ADP + phosphate. It participates in one-carbon metabolism; tetrahydrofolate interconversion. This Desulfitobacterium hafniense (strain Y51) protein is Formate--tetrahydrofolate ligase 2.